The primary structure comprises 138 residues: Transcription factor Atoh7-b (138 aa).

The 53-residue stretch at 33 to 85 (KRRLAANARERRRMQGLNTAFDSLRKVVPQWGEDKKLSKYETLQMALSYIMAL) folds into the bHLH domain.

It is found in the nucleus. It localises to the perikaryon. The protein localises to the cell projection. Its subcellular location is the axon. In terms of biological role, transcription factor that binds to DNA at the consensus sequence 5'-CAG[GC]TG-3'. Positively regulates the determination of retinal ganglion cell fate and formation of the optic nerve and retino-hypothalamic tract. Required for retinal circadian rhythm photoentrainment. Plays a role in brainstem auditory signaling and binaural processing. Regulates the differentiation of olfactory receptor neurons. During retinal neurogenesis, activates the transcription of several genes such as brn3d, coe3, cbfa2t2, glis2, elrC and xgadd45-gamma. This is Transcription factor Atoh7-b from Xenopus laevis (African clawed frog).